A 597-amino-acid polypeptide reads, in one-letter code: Arginine--tRNA ligase (597 aa).

The 'HIGH' region motif lies at 138–148 (ANPTGPMHVGH).

This sequence belongs to the class-I aminoacyl-tRNA synthetase family. In terms of assembly, monomer.

It is found in the cytoplasm. The catalysed reaction is tRNA(Arg) + L-arginine + ATP = L-arginyl-tRNA(Arg) + AMP + diphosphate. This chain is Arginine--tRNA ligase, found in Rhodopseudomonas palustris (strain HaA2).